A 127-amino-acid chain; its full sequence is Large ribosomal subunit protein uL22 (127 aa).

It belongs to the universal ribosomal protein uL22 family. Part of the 50S ribosomal subunit.

This protein binds specifically to 23S rRNA; its binding is stimulated by other ribosomal proteins, e.g. L4, L17, and L20. It is important during the early stages of 50S assembly. It makes multiple contacts with different domains of the 23S rRNA in the assembled 50S subunit and ribosome. Its function is as follows. The globular domain of the protein is located near the polypeptide exit tunnel on the outside of the subunit, while an extended beta-hairpin is found that lines the wall of the exit tunnel in the center of the 70S ribosome. In Methylobacterium nodulans (strain LMG 21967 / CNCM I-2342 / ORS 2060), this protein is Large ribosomal subunit protein uL22.